Here is a 105-residue protein sequence, read N- to C-terminus: Protein U4 (105 aa).

The helical transmembrane segment at 5–25 (FLLFLLLLVLVINPSLVVNMV) threads the bilayer.

This sequence belongs to the nanovirus U4 protein family.

The protein resides in the membrane. The chain is Protein U4 (DNA-U4) from Faba bean necrotic yellows virus (isolate Egyptian EV1-93) (FBNYV).